The sequence spans 282 residues: 2-dehydro-3-deoxyphosphooctonate aldolase (282 aa).

The protein belongs to the KdsA family.

Its subcellular location is the cytoplasm. The enzyme catalyses D-arabinose 5-phosphate + phosphoenolpyruvate + H2O = 3-deoxy-alpha-D-manno-2-octulosonate-8-phosphate + phosphate. It functions in the pathway carbohydrate biosynthesis; 3-deoxy-D-manno-octulosonate biosynthesis; 3-deoxy-D-manno-octulosonate from D-ribulose 5-phosphate: step 2/3. Its pathway is bacterial outer membrane biogenesis; lipopolysaccharide biosynthesis. The chain is 2-dehydro-3-deoxyphosphooctonate aldolase from Shewanella sp. (strain W3-18-1).